A 361-amino-acid polypeptide reads, in one-letter code: Phosphoserine aminotransferase (361 aa).

Position 43 (R43) interacts with L-glutamate. Residues 77–78 (AS), W103, T153, D173, and Q196 each bind pyridoxal 5'-phosphate. K197 bears the N6-(pyridoxal phosphate)lysine mark. Position 238 to 239 (238 to 239 (NT)) interacts with pyridoxal 5'-phosphate.

Belongs to the class-V pyridoxal-phosphate-dependent aminotransferase family. SerC subfamily. Homodimer. It depends on pyridoxal 5'-phosphate as a cofactor.

It localises to the cytoplasm. It carries out the reaction O-phospho-L-serine + 2-oxoglutarate = 3-phosphooxypyruvate + L-glutamate. The enzyme catalyses 4-(phosphooxy)-L-threonine + 2-oxoglutarate = (R)-3-hydroxy-2-oxo-4-phosphooxybutanoate + L-glutamate. The protein operates within amino-acid biosynthesis; L-serine biosynthesis; L-serine from 3-phospho-D-glycerate: step 2/3. It participates in cofactor biosynthesis; pyridoxine 5'-phosphate biosynthesis; pyridoxine 5'-phosphate from D-erythrose 4-phosphate: step 3/5. Functionally, catalyzes the reversible conversion of 3-phosphohydroxypyruvate to phosphoserine and of 3-hydroxy-2-oxo-4-phosphonooxybutanoate to phosphohydroxythreonine. In Pseudomonas aeruginosa (strain ATCC 15692 / DSM 22644 / CIP 104116 / JCM 14847 / LMG 12228 / 1C / PRS 101 / PAO1), this protein is Phosphoserine aminotransferase.